The sequence spans 92 residues: Small ribosomal subunit protein bS20 (92 aa).

Residues 1–28 (MANTASAEKRNRQAQKRRARNVQVRTGV) form a disordered region.

Belongs to the bacterial ribosomal protein bS20 family.

Functionally, binds directly to 16S ribosomal RNA. This chain is Small ribosomal subunit protein bS20, found in Anaeromyxobacter dehalogenans (strain 2CP-C).